Here is a 169-residue protein sequence, read N- to C-terminus: Neudesin (169 aa).

Residues 1–28 form the signal peptide; that stretch reads MAGPAPGRRLVALALIVALAVGLPTAGA. One can recognise a Cytochrome b5 heme-binding domain in the interval 41–126; it reads VRLFTEEELA…EELESLDDVF (86 aa). An N6-acetyllysine modification is found at Lys133. The disordered stretch occupies residues 148–169; that stretch reads DGSPNLDFKPEDQPHFDIKDEF. Residues 155 to 169 show a composition bias toward basic and acidic residues; sequence FKPEDQPHFDIKDEF.

This sequence belongs to the cytochrome b5 family. MAPR subfamily. As to quaternary structure, interacts with PINK1 and PARK7.

The protein resides in the secreted. The protein localises to the extracellular space. Its subcellular location is the mitochondrion. It localises to the endoplasmic reticulum. In terms of biological role, acts as a neurotrophic factor in postnatal mature neurons enhancing neuronal survival. Promotes cell proliferation and neurogenesis in undifferentiated neural progenitor cells at the embryonic stage and inhibits differentiation of astrocytes. Its neurotrophic activity is exerted via MAPK1/ERK2, MAPK3/ERK1 and AKT1/AKT pathways. Neurotrophic activity is enhanced by binding to heme. Also acts as an anorexigenic neurotrophic factor that contributes to energy balance. This Bos taurus (Bovine) protein is Neudesin (NENF).